Reading from the N-terminus, the 391-residue chain is Pyruvate dehydrogenase E1 component subunit alpha, mitochondrial (391 aa).

The N-terminal 26 residues, Met-1–Leu-26, are a transit peptide targeting the mitochondrion. Pyruvate is bound by residues His-92, Tyr-118, Arg-119, Gly-167, Val-169, Asp-198, Gly-199, Ala-200, Asn-227, and Tyr-229. Thiamine diphosphate is bound by residues Tyr-118, Arg-119, Gly-167, Val-169, Asp-198, Gly-199, Ala-200, and Asn-227. Residue Asp-198 participates in Mg(2+) binding. Mg(2+) is bound by residues Asn-227 and Tyr-229. Residue His-293 participates in thiamine diphosphate binding. Positions Ser-294–Gln-313 are disordered. The span at Arg-303–Gln-313 shows a compositional bias: basic and acidic residues.

As to quaternary structure, tetramer of 2 alpha and 2 beta subunits. Thiamine diphosphate serves as cofactor. Mg(2+) is required as a cofactor.

The protein resides in the mitochondrion matrix. The enzyme catalyses N(6)-[(R)-lipoyl]-L-lysyl-[protein] + pyruvate + H(+) = N(6)-[(R)-S(8)-acetyldihydrolipoyl]-L-lysyl-[protein] + CO2. Its activity is regulated as follows. E1 activity is regulated by phosphorylation (inactivation) and dephosphorylation (activation) of the alpha subunit. Functionally, the pyruvate dehydrogenase complex catalyzes the overall conversion of pyruvate to acetyl-CoA and CO(2). It contains multiple copies of three enzymatic components: pyruvate dehydrogenase (E1), dihydrolipoamide acetyltransferase (E2) and lipoamide dehydrogenase (E3). This Solanum tuberosum (Potato) protein is Pyruvate dehydrogenase E1 component subunit alpha, mitochondrial.